The sequence spans 91 residues: YcgL domain-containing protein ETA_15380 (91 aa).

In terms of domain architecture, YcgL spans 1–85 (MFCVIYRSPQ…PLESLLKIHL (85 aa)).

This Erwinia tasmaniensis (strain DSM 17950 / CFBP 7177 / CIP 109463 / NCPPB 4357 / Et1/99) protein is YcgL domain-containing protein ETA_15380.